Here is a 462-residue protein sequence, read N- to C-terminus: tRNA(Ile)-lysidine synthase (462 aa).

26-31 contributes to the ATP binding site; it reads SGGVDS.

This sequence belongs to the tRNA(Ile)-lysidine synthase family.

It localises to the cytoplasm. The enzyme catalyses cytidine(34) in tRNA(Ile2) + L-lysine + ATP = lysidine(34) in tRNA(Ile2) + AMP + diphosphate + H(+). In terms of biological role, ligates lysine onto the cytidine present at position 34 of the AUA codon-specific tRNA(Ile) that contains the anticodon CAU, in an ATP-dependent manner. Cytidine is converted to lysidine, thus changing the amino acid specificity of the tRNA from methionine to isoleucine. This is tRNA(Ile)-lysidine synthase from Enterococcus faecalis (strain ATCC 700802 / V583).